Reading from the N-terminus, the 456-residue chain is Cytochrome c biogenesis protein CcsB (456 aa).

3 helical membrane passes run 29–49 (LRLA…GTVI), 88–108 (AGWF…CTFR), and 174–194 (VGPI…IWGS).

The protein belongs to the Ccs1/CcsB family. As to quaternary structure, may interact with CcsA.

The protein resides in the cellular thylakoid membrane. Its function is as follows. Required during biogenesis of c-type cytochromes (cytochrome c6 and cytochrome f) at the step of heme attachment. The protein is Cytochrome c biogenesis protein CcsB of Synechococcus sp. (strain ATCC 27144 / PCC 6301 / SAUG 1402/1) (Anacystis nidulans).